The chain runs to 128 residues: Glycine cleavage system H protein (128 aa).

Positions 23–105 (IGIVGITWFA…YGEGWILKLE (83 aa)) constitute a Lipoyl-binding domain. Lys64 carries the post-translational modification N6-lipoyllysine.

The protein belongs to the GcvH family. As to quaternary structure, the glycine cleavage system is composed of four proteins: P, T, L and H. (R)-lipoate serves as cofactor.

In terms of biological role, the glycine cleavage system catalyzes the degradation of glycine. The H protein shuttles the methylamine group of glycine from the P protein to the T protein. In Symbiobacterium thermophilum (strain DSM 24528 / JCM 14929 / IAM 14863 / T), this protein is Glycine cleavage system H protein.